Consider the following 208-residue polypeptide: Ribosomal RNA large subunit methyltransferase E (208 aa).

Positions 62, 64, 82, 98, and 123 each coordinate S-adenosyl-L-methionine. K163 acts as the Proton acceptor in catalysis.

The protein belongs to the class I-like SAM-binding methyltransferase superfamily. RNA methyltransferase RlmE family.

The protein resides in the cytoplasm. It catalyses the reaction uridine(2552) in 23S rRNA + S-adenosyl-L-methionine = 2'-O-methyluridine(2552) in 23S rRNA + S-adenosyl-L-homocysteine + H(+). In terms of biological role, specifically methylates the uridine in position 2552 of 23S rRNA at the 2'-O position of the ribose in the fully assembled 50S ribosomal subunit. This chain is Ribosomal RNA large subunit methyltransferase E, found in Actinobacillus succinogenes (strain ATCC 55618 / DSM 22257 / CCUG 43843 / 130Z).